The following is a 221-amino-acid chain: MSDSEEESQDRQLKIVVLGDGASGKTSLATCFAQETFGKRYKQTIGLDFFLRRITLPGNLNVTLQIWDIGGQTIGGKMLDKYIYGAQGVLLVYDITNYQSFENLEDWYTVVKKVSEESETRPLVALVGNKIDLEHMRTIKPEKHLRFCQENGFSSHFVSAKTGDSVFLCFQKVAAEILGIKLNKAEIEQSQRVVKADIVNYNQEPMSRTVNPPRSSMCAVQ.

Serine 2 bears the N-acetylserine mark. Serine 8 is modified (phosphoserine). 9 residues coordinate GTP: glycine 21, glycine 24, lysine 25, threonine 26, serine 27, glycine 38, lysine 39, tyrosine 41, and threonine 44. Residue threonine 26 participates in Mg(2+) binding. The tract at residues glutamate 35–phenylalanine 49 is switch I. Mg(2+) is bound by residues threonine 44 and aspartate 68. Positions aspartate 68 to glycine 85 are switch II. Residues glycine 71, asparagine 129, lysine 130, aspartate 132, alanine 160, and lysine 161 each contribute to the GTP site. A Cysteine methyl ester modification is found at cysteine 218. A lipid anchor (S-farnesyl cysteine) is attached at cysteine 218. A propeptide spans alanine 219–glutamine 221 (removed in mature form).

Belongs to the small GTPase superfamily. Rab family. In terms of assembly, interacts (prenylated form) with PDE6D; the interaction promotes RAB28 delivery to the photoreceptor outer segments. Interacts with KCNJ13; the interaction may facilitate cone outer segments phagocytosis. Also participates in nuclear factor kappa-B p65/RELA nuclear transport in endothelial cells. The cofactor is Mg(2+). Isoprenylated.

The protein localises to the cell membrane. Its subcellular location is the cytoplasm. The protein resides in the cytoskeleton. It is found in the cilium basal body. It localises to the nucleus. It carries out the reaction GTP + H2O = GDP + phosphate + H(+). With respect to regulation, regulated by guanine nucleotide exchange factors (GEFs) which promote the exchange of bound GDP for free GTP. Regulated by GTPase activating proteins (GAPs) which increase the GTP hydrolysis activity. Inhibited by GDP dissociation inhibitors (GDIs). The small GTPases Rab are key regulators of intracellular membrane trafficking, from the formation of transport vesicles to their fusion with membranes. Rabs cycle between an inactive GDP-bound form and an active GTP-bound form that is able to recruit to membranes different sets of downstream effectors directly responsible for vesicle formation, movement, tethering and fusion. RAB28 is required for shedding and phagocytosis of cone cell outer segments (OS) discs in the retina. Also participates in nuclear factor kappa-B p65/RELA nuclear transport in endothelial cells. The sequence is that of Ras-related protein Rab-28 (RAB28) from Pongo abelii (Sumatran orangutan).